Reading from the N-terminus, the 610-residue chain is UvrABC system protein C (610 aa).

A GIY-YIG domain is found at 16–94; it reads SQPGVYRMYD…IKLYQPRYNV (79 aa). A UVR domain is found at 204-239; sequence DQVLNQLVARMEQASGDLRFEEAGRLRDQIQAVRRV.

This sequence belongs to the UvrC family. Interacts with UvrB in an incision complex.

The protein resides in the cytoplasm. Functionally, the UvrABC repair system catalyzes the recognition and processing of DNA lesions. UvrC both incises the 5' and 3' sides of the lesion. The N-terminal half is responsible for the 3' incision and the C-terminal half is responsible for the 5' incision. This chain is UvrABC system protein C, found in Erwinia tasmaniensis (strain DSM 17950 / CFBP 7177 / CIP 109463 / NCPPB 4357 / Et1/99).